The sequence spans 328 residues: GMP reductase (328 aa).

Cys176 functions as the Thioimidate intermediate in the catalytic mechanism. Position 205 to 228 (205 to 228) interacts with NADP(+); that stretch reads IIADGGIRTHGDIAKSIRFGASMI.

The protein belongs to the IMPDH/GMPR family. GuaC type 2 subfamily.

The catalysed reaction is IMP + NH4(+) + NADP(+) = GMP + NADPH + 2 H(+). Its function is as follows. Catalyzes the irreversible NADPH-dependent deamination of GMP to IMP. It functions in the conversion of nucleobase, nucleoside and nucleotide derivatives of G to A nucleotides, and in maintaining the intracellular balance of A and G nucleotides. The chain is GMP reductase from Streptococcus pneumoniae (strain CGSP14).